Reading from the N-terminus, the 511-residue chain is Glucose-6-phosphate 1-dehydrogenase, cytoplasmic isoform (511 aa).

NADP(+)-binding positions include 36–43 (GASGDLAK), Arg71, Tyr151, and Lys178. Residues Lys178, 208–212 (HYLGK), Glu246, and Asp265 contribute to the D-glucose 6-phosphate site. His270 serves as the catalytic Proton acceptor. Residue Lys353 participates in NADP(+) binding. 2 residues coordinate D-glucose 6-phosphate: Lys356 and Arg361. The NADP(+) site is built by Lys362, Arg366, and Arg390. Gln392 is a binding site for D-glucose 6-phosphate. Residues 398-400 (YMK), 418-420 (DLS), Arg484, and Trp506 contribute to the NADP(+) site.

Belongs to the glucose-6-phosphate dehydrogenase family. In terms of assembly, homotetramer. Found in tubers, stolons, roots, and flower buds.

The protein resides in the cytoplasm. The enzyme catalyses D-glucose 6-phosphate + NADP(+) = 6-phospho-D-glucono-1,5-lactone + NADPH + H(+). Its pathway is carbohydrate degradation; pentose phosphate pathway; D-ribulose 5-phosphate from D-glucose 6-phosphate (oxidative stage): step 1/3. With respect to regulation, regulated by metabolites. Its function is as follows. Catalyzes the rate-limiting step of the oxidative pentose-phosphate pathway, which represents a route for the dissimilation of carbohydrates besides glycolysis. The main function of this enzyme is to generate NADPH for reductive biosyntheses. This Solanum tuberosum (Potato) protein is Glucose-6-phosphate 1-dehydrogenase, cytoplasmic isoform (G6PDH).